The chain runs to 356 residues: sn-glycerol-3-phosphate import ATP-binding protein UgpC (356 aa).

Residues 4–235 (LKLQAVTKSW…PASLFVASFI (232 aa)) enclose the ABC transporter domain. An ATP-binding site is contributed by 37–44 (GPSGCGKS).

Belongs to the ABC transporter superfamily. sn-glycerol-3-phosphate importer (TC 3.A.1.1.3) family. In terms of assembly, the complex is composed of two ATP-binding proteins (UgpC), two transmembrane proteins (UgpA and UgpE) and a solute-binding protein (UgpB).

The protein resides in the cell inner membrane. It catalyses the reaction sn-glycerol 3-phosphate(out) + ATP + H2O = sn-glycerol 3-phosphate(in) + ADP + phosphate + H(+). Part of the ABC transporter complex UgpBAEC involved in sn-glycerol-3-phosphate (G3P) import. Responsible for energy coupling to the transport system. The sequence is that of sn-glycerol-3-phosphate import ATP-binding protein UgpC from Escherichia coli O6:K15:H31 (strain 536 / UPEC).